The primary structure comprises 176 residues: uncharacterized protein (176 aa).

This is an uncharacterized protein from Treponema pallidum (strain Nichols).